Reading from the N-terminus, the 322-residue chain is Large ribosomal subunit protein uL15m (322 aa).

Residues methionine 1–tyrosine 57 constitute a mitochondrion transit peptide. The segment at glycine 69–arginine 99 is disordered. The segment covering proline 81–glutamine 93 has biased composition (gly residues).

The protein belongs to the universal ribosomal protein uL15 family. As to quaternary structure, component of the mitochondrial large ribosomal subunit (mt-LSU). Mature yeast 74S mitochondrial ribosomes consist of a small (37S) and a large (54S) subunit. The 37S small subunit contains a 15S ribosomal RNA (15S mt-rRNA) and 34 different proteins. The 54S large subunit contains a 21S rRNA (21S mt-rRNA) and 46 different proteins.

The protein localises to the mitochondrion. Functionally, component of the mitochondrial ribosome (mitoribosome), a dedicated translation machinery responsible for the synthesis of mitochondrial genome-encoded proteins, including at least some of the essential transmembrane subunits of the mitochondrial respiratory chain. The mitoribosomes are attached to the mitochondrial inner membrane and translation products are cotranslationally integrated into the membrane. The protein is Large ribosomal subunit protein uL15m (MRPL10) of Saccharomyces cerevisiae (strain ATCC 204508 / S288c) (Baker's yeast).